The primary structure comprises 205 residues: Proteasome subunit beta type-3 (205 aa).

Ser-2 bears the N-acetylserine mark. Lys-77 carries the N6-acetyllysine modification.

This sequence belongs to the peptidase T1B family. As to quaternary structure, the 26S proteasome consists of a 20S proteasome core and two 19S regulatory subunits. The 20S proteasome core is a barrel-shaped complex made of 28 subunits that are arranged in four stacked rings. The two outer rings are each formed by seven alpha subunits, and the two inner rings are formed by seven beta subunits. The proteolytic activity is exerted by three beta-subunits PSMB5, PSMB6 and PSMB7.

It localises to the cytoplasm. It is found in the nucleus. Functionally, non-catalytic component of the 20S core proteasome complex involved in the proteolytic degradation of most intracellular proteins. This complex plays numerous essential roles within the cell by associating with different regulatory particles. Associated with two 19S regulatory particles, forms the 26S proteasome and thus participates in the ATP-dependent degradation of ubiquitinated proteins. The 26S proteasome plays a key role in the maintenance of protein homeostasis by removing misfolded or damaged proteins that could impair cellular functions, and by removing proteins whose functions are no longer required. Associated with the PA200 or PA28, the 20S proteasome mediates ubiquitin-independent protein degradation. This type of proteolysis is required in several pathways including spermatogenesis (20S-PA200 complex) or generation of a subset of MHC class I-presented antigenic peptides (20S-PA28 complex). This is Proteasome subunit beta type-3 (Psmb3) from Rattus norvegicus (Rat).